Here is a 653-residue protein sequence, read N- to C-terminus: Putative clathrin assembly protein At2g25430 (653 aa).

In terms of domain architecture, ENTH spans 23–159 (VASNMAPDLE…ELALFERKSG (137 aa)). Over residues 160–171 (VSVNSGGNSSHH) the composition is skewed to low complexity. Residues 160 to 240 (VSVNSGGNSS…GGGGGGRDEK (81 aa)) are disordered. Residues 172-186 (SNNDDRYGRGRDDFR) are compositionally biased toward basic and acidic residues. Gly residues predominate over residues 197-214 (NGGGGGSDFRGDNNGYGG). Residue Ser-221 is modified to Phosphoserine. The residue at position 244 (Thr-244) is a Phosphothreonine. Over residues 376–389 (RAKRGKSPERKEIE) the composition is skewed to basic and acidic residues. Residues 376 to 431 (RAKRGKSPERKEIEAPPPVVEEEEPEPDMNEIKALPPPENYTPPPPPEPEPQPEKP) are disordered. Over residues 395–404 (VEEEEPEPDM) the composition is skewed to acidic residues. Positions 410–425 (LPPPENYTPPPPPEPE) are enriched in pro residues.

It is found in the membrane. It localises to the clathrin-coated pit. The protein resides in the golgi apparatus. The protein localises to the cytoplasmic vesicle. Its subcellular location is the clathrin-coated vesicle. The polypeptide is Putative clathrin assembly protein At2g25430 (Arabidopsis thaliana (Mouse-ear cress)).